Consider the following 239-residue polypeptide: Carboxy-S-adenosyl-L-methionine synthase (239 aa).

Residues Tyr-36, 61-63 (GCS), 111-112 (DI), Asn-126, and Arg-193 each bind S-adenosyl-L-methionine.

It belongs to the class I-like SAM-binding methyltransferase superfamily. Cx-SAM synthase family. As to quaternary structure, homodimer.

The catalysed reaction is prephenate + S-adenosyl-L-methionine = carboxy-S-adenosyl-L-methionine + 3-phenylpyruvate + H2O. Its function is as follows. Catalyzes the conversion of S-adenosyl-L-methionine (SAM) to carboxy-S-adenosyl-L-methionine (Cx-SAM). This Nitratiruptor sp. (strain SB155-2) protein is Carboxy-S-adenosyl-L-methionine synthase.